The chain runs to 424 residues: GTPase Obg (424 aa).

Residues 1–158 form the Obg domain; sequence MFVDRAEVFV…RYISLELKIL (158 aa). The disordered stretch occupies residues 21-42; it reads SFRREKYVPRGGPDGGDGGKGG. A compositionally biased stretch (gly residues) spans 32 to 42; that stretch reads GPDGGDGGKGG. One can recognise an OBG-type G domain in the interval 159–331; sequence ADVGLLGFPN…LMKEAAAMLT (173 aa). Residues 165 to 172, 190 to 194, 212 to 215, 282 to 285, and 312 to 314 each bind GTP; these read GFPNVGKS, FTTLS, DIPG, NKAD, and SAA. Residues S172 and T192 each coordinate Mg(2+). In terms of domain architecture, OCT spans 345 to 424; the sequence is KFIPEEKRFT…LNDFEFDYIL (80 aa).

Belongs to the TRAFAC class OBG-HflX-like GTPase superfamily. OBG GTPase family. Monomer. Mg(2+) serves as cofactor.

It is found in the cytoplasm. Functionally, an essential GTPase which binds GTP, GDP and possibly (p)ppGpp with moderate affinity, with high nucleotide exchange rates and a fairly low GTP hydrolysis rate. Plays a role in control of the cell cycle, stress response, ribosome biogenesis and in those bacteria that undergo differentiation, in morphogenesis control. This Clostridium kluyveri (strain NBRC 12016) protein is GTPase Obg.